The following is a 161-amino-acid chain: UPF0178 protein BSUIS_A1819 (161 aa).

It belongs to the UPF0178 family.

The polypeptide is UPF0178 protein BSUIS_A1819 (Brucella suis (strain ATCC 23445 / NCTC 10510)).